A 147-amino-acid chain; its full sequence is Phosphoribosyl-AMP cyclohydrolase (147 aa).

Asp89 contacts Mg(2+). Cys90 contacts Zn(2+). Positions 91 and 93 each coordinate Mg(2+). Residues Cys106 and Cys113 each coordinate Zn(2+).

The protein belongs to the PRA-CH family. Homodimer. The cofactor is Mg(2+). It depends on Zn(2+) as a cofactor.

It localises to the cytoplasm. The catalysed reaction is 1-(5-phospho-beta-D-ribosyl)-5'-AMP + H2O = 1-(5-phospho-beta-D-ribosyl)-5-[(5-phospho-beta-D-ribosylamino)methylideneamino]imidazole-4-carboxamide. Its pathway is amino-acid biosynthesis; L-histidine biosynthesis; L-histidine from 5-phospho-alpha-D-ribose 1-diphosphate: step 3/9. Functionally, catalyzes the hydrolysis of the adenine ring of phosphoribosyl-AMP. The protein is Phosphoribosyl-AMP cyclohydrolase of Nitrobacter hamburgensis (strain DSM 10229 / NCIMB 13809 / X14).